The primary structure comprises 354 residues: Rhodopsin (354 aa).

Residues 1–36 are Extracellular-facing; it reads MNGTEGPYFYVPMVNTTGIVRSPYEYPQYYLVSPAA. Residues N2 and N15 are each glycosylated (N-linked (GlcNAc...) asparagine). A helical transmembrane segment spans residues 37 to 61; the sequence is YACLGAYMFFLILVGFPVNFLTLYV. The Cytoplasmic portion of the chain corresponds to 62 to 73; sequence TIEHKKLRTPLN. Residues 74–96 form a helical membrane-spanning segment; the sequence is YILLNLAVADLFMVFGGFTTTIY. Residues 97 to 110 are Extracellular-facing; the sequence is TSMHGYFVLGRLGC. A disulfide bridge links C110 with C187. The chain crosses the membrane as a helical span at residues 111–133; the sequence is NLEGYFATLGGEIGLWSLVVLAV. Positions 134 to 136 match the 'Ionic lock' involved in activated form stabilization motif; it reads ERW. Residues 134 to 152 are Cytoplasmic-facing; the sequence is ERWLVVCKPISNFRFTENH. A helical membrane pass occupies residues 153–173; sequence AIMGLVFTWIMANACAAPPLL. Topologically, residues 174-202 are extracellular; sequence GWSRYIPEGMQCSCGVDYYTRAEGFNNES. Residues 203-224 form a helical membrane-spanning segment; the sequence is FVIYMFICHFCIPLVVVFFCYG. Topologically, residues 225 to 252 are cytoplasmic; it reads RLLCAVKEAAAAQQESETTQRAEREVTR. A helical transmembrane segment spans residues 253–274; sequence MVVILVIGFLVCWTPYASVAWY. Residues 275–286 lie on the Extracellular side of the membrane; sequence IFSNQGSEFGPL. The helical transmembrane segment at 287–308 threads the bilayer; it reads FMTIPAFFAKSSSIYNPMIYIC. Residue K296 is modified to N6-(retinylidene)lysine. The Cytoplasmic segment spans residues 309–354; sequence MNKQFRHCMITTLCCGKNPFEEEEGASTTASKTEASSVSSSSVSPA. S-palmitoyl cysteine attachment occurs at residues C322 and C323. Residues 333 to 354 are disordered; that stretch reads GASTTASKTEASSVSSSSVSPA. Low complexity predominate over residues 334 to 354; the sequence is ASTTASKTEASSVSSSSVSPA.

This sequence belongs to the G-protein coupled receptor 1 family. Opsin subfamily. Post-translationally, phosphorylated on some or all of the serine and threonine residues present in the C-terminal region. In terms of processing, contains one covalently linked retinal chromophore.

It is found in the membrane. Its subcellular location is the cell projection. The protein resides in the cilium. The protein localises to the photoreceptor outer segment. Its function is as follows. Photoreceptor required for image-forming vision at low light intensity. While most salt water fish species use retinal as chromophore, most freshwater fish use 3-dehydroretinal, or a mixture of retinal and 3-dehydroretinal. Light-induced isomerization of 11-cis to all-trans retinal triggers a conformational change that activates signaling via G-proteins. Subsequent receptor phosphorylation mediates displacement of the bound G-protein alpha subunit by arrestin and terminates signaling. This chain is Rhodopsin (rho), found in Gambusia affinis (Western mosquitofish).